A 356-amino-acid polypeptide reads, in one-letter code: Protein ATP1B4 (356 aa).

Residues 1–109 (MRRQLRSRRA…SLARTGQSRS (109 aa)) are Nuclear-facing. The interval 26 to 78 (EANHNYLADEEEEAEEEAQVMMVPGLEEEEEEEEGKEEEEEREEEEGQGQSTG) is disordered. Acidic residues-rich tracts occupy residues 33 to 43 (ADEEEEAEEEA) and 51 to 72 (LEEE…EEEG). Residues 110–130 (LILVIYFFFYASLAAVITLFI) form a helical; Signal-anchor for type II membrane protein membrane-spanning segment. Residues 131 to 356 (YMLFLAISPY…RIIFTLNIET (226 aa)) are Perinuclear space-facing.

It belongs to the X(+)/potassium ATPases subunit beta family. Associates with a SMAD7-transcriptional complex. Interacts with TOR1AIP1. Does not associate with known Na,K-ATPase alpha-subunits. Interacts with SNW1. Expressed in skeletal muscle (at protein level). Expressed during postnatal development in skeletal muscle and heart.

The protein localises to the nucleus inner membrane. Functionally, may act as a transcriptional coregulator during muscle development through its interaction with SNW1. Has lost its ancestral function as a Na,K-ATPase beta-subunit. The protein is Protein ATP1B4 (Atp1b4) of Mus musculus (Mouse).